Consider the following 137-residue polypeptide: Nucleoside diphosphate kinase (137 aa).

Residues Lys-10, Phe-58, Arg-86, Thr-92, Arg-103, and Asn-113 each contribute to the ATP site. The active-site Pros-phosphohistidine intermediate is His-116.

Belongs to the NDK family. Homotetramer. Mg(2+) serves as cofactor.

The protein resides in the cytoplasm. The enzyme catalyses a 2'-deoxyribonucleoside 5'-diphosphate + ATP = a 2'-deoxyribonucleoside 5'-triphosphate + ADP. The catalysed reaction is a ribonucleoside 5'-diphosphate + ATP = a ribonucleoside 5'-triphosphate + ADP. Its function is as follows. Major role in the synthesis of nucleoside triphosphates other than ATP. The ATP gamma phosphate is transferred to the NDP beta phosphate via a ping-pong mechanism, using a phosphorylated active-site intermediate. This chain is Nucleoside diphosphate kinase, found in Helicobacter pylori (strain P12).